Here is a 587-residue protein sequence, read N- to C-terminus: Mitogen-activated protein kinase 4 (587 aa).

The 293-residue stretch at 20 to 312 (FVDFQPLGFG…AEMGLQHPYM (293 aa)) folds into the Protein kinase domain. ATP contacts are provided by residues 26–34 (LGFGVNGLV) and Lys49. Asp149 serves as the catalytic Proton acceptor. Ser186 bears the Phosphoserine; by PAK1, PAK2 and PAK3 mark. Residues 186-188 (SEG) carry the SEG motif motif. The FRIEDE motif motif lies at 328–333 (FRIEDE). Basic and acidic residues-rich tracts occupy residues 373–383 (QDASEVQRDPR) and 395–413 (VDPRKDSHSSSERFLEQSH). The tract at residues 373 to 413 (QDASEVQRDPRAGSAPLAEDVQVDPRKDSHSSSERFLEQSH) is disordered. Residue Ser434 is modified to Phosphoserine. Residues 499–534 (STQGGPEHASPPADDPERRLSASPPGRPAPVDGGAS) are disordered.

The protein belongs to the protein kinase superfamily. CMGC Ser/Thr protein kinase family. MAP kinase subfamily. As to quaternary structure, homodimer. Heterodimer with ERK3/MAPK6. Interacts with (via FRIEDE motif) MAPKAPK5. Mg(2+) serves as cofactor. In terms of processing, phosphorylated at Ser-186 by PAK1, PAK2 and PAK3 resulting in catalytic activation. Phosphorylated by MAPKAPK5 at other sites. In terms of tissue distribution, high expression in heart and brain.

The protein resides in the cytoplasm. It is found in the nucleus. The enzyme catalyses L-seryl-[protein] + ATP = O-phospho-L-seryl-[protein] + ADP + H(+). The catalysed reaction is L-threonyl-[protein] + ATP = O-phospho-L-threonyl-[protein] + ADP + H(+). Activated by phosphorylation at Ser-186. Functionally, atypical MAPK protein. Phosphorylates microtubule-associated protein 2 (MAP2) and MAPKAPK5. The precise role of the complex formed with MAPKAPK5 is still unclear, but the complex follows a complex set of phosphorylation events: upon interaction with atypical MAPKAPK5, ERK4/MAPK4 is phosphorylated at Ser-186 and then mediates phosphorylation and activation of MAPKAPK5, which in turn phosphorylates ERK4/MAPK4. May promote entry in the cell cycle. The protein is Mitogen-activated protein kinase 4 (MAPK4) of Homo sapiens (Human).